The chain runs to 155 residues: MANAVLVVRIKGQADCPYWASTTMDLLKLERKYRAVILPAKDNLLGMLKKVQHYVAWVDLDTELAQELIDKKARKSGYKKVTPEDLKELGYASSAELAAALTEGKTMLSKLKPLKPWFALAPPRHGFKRSTKRLYGQKGILGRNKELATIVRNMI.

Belongs to the universal ribosomal protein uL30 family. In terms of assembly, part of the 50S ribosomal subunit.

The protein is Large ribosomal subunit protein uL30 of Nitrosopumilus maritimus (strain SCM1).